Consider the following 244-residue polypeptide: Probable Ni/Fe-hydrogenase B-type cytochrome subunit (244 aa).

The next 4 membrane-spanning stretches (helical) occupy residues Leu-39 to Gly-59, Phe-73 to Met-93, Phe-150 to Tyr-171, and Leu-204 to Ile-221.

Belongs to the HupC/HyaC/HydC family.

It localises to the cell membrane. Functionally, probable b-type cytochrome. This Cupriavidus necator (strain ATCC 17699 / DSM 428 / KCTC 22496 / NCIMB 10442 / H16 / Stanier 337) (Ralstonia eutropha) protein is Probable Ni/Fe-hydrogenase B-type cytochrome subunit (hoxZ).